The following is a 231-amino-acid chain: Ureidoacrylate amidohydrolase RutB (231 aa).

D25 acts as the Proton acceptor in catalysis. K134 is a catalytic residue. C167 functions as the Nucleophile in the catalytic mechanism.

The protein belongs to the isochorismatase family. RutB subfamily.

It catalyses the reaction (Z)-3-ureidoacrylate + H2O + H(+) = (Z)-3-aminoacrylate + NH4(+) + CO2. The catalysed reaction is (Z)-3-ureidoacrylate + H2O = (Z)-3-aminoacrylate + carbamate + H(+). It carries out the reaction (Z)-2-methylureidoacrylate + H2O + H(+) = (Z)-2-methylaminoacrylate + NH4(+) + CO2. Its function is as follows. Hydrolyzes ureidoacrylate to form aminoacrylate and carbamate. The carbamate hydrolyzes spontaneously, thereby releasing one of the nitrogen atoms of the pyrimidine ring as ammonia and one of its carbon atoms as CO2. The chain is Ureidoacrylate amidohydrolase RutB from Escherichia coli O9:H4 (strain HS).